A 111-amino-acid polypeptide reads, in one-letter code: Large ribosomal subunit protein uL22 (111 aa).

The protein belongs to the universal ribosomal protein uL22 family. Part of the 50S ribosomal subunit.

In terms of biological role, this protein binds specifically to 23S rRNA; its binding is stimulated by other ribosomal proteins, e.g. L4, L17, and L20. It is important during the early stages of 50S assembly. It makes multiple contacts with different domains of the 23S rRNA in the assembled 50S subunit and ribosome. Functionally, the globular domain of the protein is located near the polypeptide exit tunnel on the outside of the subunit, while an extended beta-hairpin is found that lines the wall of the exit tunnel in the center of the 70S ribosome. The sequence is that of Large ribosomal subunit protein uL22 from Chlamydia abortus (strain DSM 27085 / S26/3) (Chlamydophila abortus).